The sequence spans 482 residues: Ras GTPase-activating protein-binding protein 2 (482 aa).

The region spanning 11–133 (VGREFVRQYY…FYVHNDMFRY (123 aa)) is the NTF2 domain. The span at 140 to 158 (DSEPELDEESEDEVEEEQE) shows a compositional bias: acidic residues. Disordered stretches follow at residues 140–171 (DSEPELDEESEDEVEEEQEERQPSPEPVQENA) and 187–318 (EPLE…EQND). Phosphoserine is present on residues S141, S149, and S225. Residues 142–220 (EPELDEESED…PQVEEKNLEE (79 aa)) form an acidic disordered region region. Over residues 191 to 225 (ESSHEPEPEPESETKTEELKPQVEEKNLEELEEKS) the composition is skewed to basic and acidic residues. T227 bears the Phosphothreonine mark. Position 235 is a phosphoserine (S235). Residues 247-264 (ASVTSKNLPPSGTVSSSG) show a composition bias toward polar residues. Residue K281 forms a Glycyl lysine isopeptide (Lys-Gly) (interchain with G-Cter in SUMO2) linkage. A compositionally biased stretch (basic and acidic residues) spans 290–300 (RVREQRPRERP). Residues 331 to 409 (HQLFVGNLPH…VRLNVEEKKT (79 aa)) form the RRM domain. K392 carries the post-translational modification N6-succinyllysine. The tract at residues 404–476 (VEEKKTRAAR…GRGTGQMEGR (73 aa)) is RG-rich region. Positions 408–432 (KTRAARERETRGGGDDRRDIRRNDR) are enriched in basic and acidic residues. The segment at 408 to 482 (KTRAARERET…MEGRFTGQRR (75 aa)) is disordered. A compositionally biased stretch (gly residues) spans 433-445 (GPGGPRGIVGGGM). R457 carries the post-translational modification Omega-N-methylarginine. The residue at position 466 (S466) is a Phosphoserine. The residue at position 468 (R468) is an Omega-N-methylarginine.

Forms homooligomers. Forms heterodimers with G3BP1. Interacts with NFKBIA (via N-terminus). Interacts (via NTF2 domain) with USP10; inhibiting stress granule formation. Interacts (via NTF2 domain) with CAPRIN1; promoting stress granule formation. Associates (via RG-rich region) with 40S ribosome subunits. Interacts with PABPC1. In terms of assembly, (Microbial infection) Interacts with non-structural protein 3 (via C-terminus) of Sindbis virus and Semliki forest virus; this interaction inhibits the formation of host stress granules on viral mRNAs and the nsp3-G3BP2 complexes bind viral RNAs and probably orchestrate the assembly of viral replication complexes. In terms of processing, (Microbial infection) Cleaved by foot-and-mouth disease virus leader protease; this cleavage suppresses the formation of cytoplasmic stress granules.

Its subcellular location is the cytoplasm. It is found in the stress granule. Under physiological conditions, G3BP2 adopts a compact state that is stabilized by intramolecular interactions between the RG-rich and the acidic regions that inhibit phase separation. Upon stress, polysomes disassemble and mRNAs are released in an unfolded protein-free state. Binding of unfolded mRNA to G3BP2 outcompetes the intramolecular interactions and RNA-bound G3BP2 adopts an expanded conformation in which the RG-rich region becomes exposed to engage in protein-protein and protein-RNA interactions, allowing physical cross-linking of RNA molecules to form protein-RNA condensates, leading to liquid-liquid phase separation (LLPS). Functionally, scaffold protein that plays an essential role in cytoplasmic stress granule formation which acts as a platform for antiviral signaling. Plays an essential role in stress granule formation. Stress granules are membraneless compartments that store mRNAs and proteins, such as stalled translation pre-initiation complexes, in response to stress. Promotes formation of stress granules phase-separated membraneless compartment by undergoing liquid-liquid phase separation (LLPS) upon unfolded RNA-binding: functions as a molecular switch that triggers RNA-dependent LLPS in response to a rise in intracellular free RNA concentrations. This Homo sapiens (Human) protein is Ras GTPase-activating protein-binding protein 2.